A 487-amino-acid polypeptide reads, in one-letter code: Lysophospholipid acyltransferase 5 (487 aa).

Ala-2 carries the post-translational modification N-acetylalanine. 4 helical membrane-spanning segments follow: residues 44–64 (LIFS…YLFY), 84–104 (FNFG…FLIL), 111–131 (VTAV…GYYY), and 180–200 (GVPS…FLVG). A glycan (N-linked (GlcNAc...) asparagine) is linked at Asn-225. The next 2 membrane-spanning stretches (helical) occupy residues 236–256 (LGLV…DDYL) and 285–305 (VTCW…FNGF). Residues Asn-308 and Asn-331 are each glycosylated (N-linked (GlcNAc...) asparagine). Catalysis depends on residues Asn-338 and His-374. The next 3 helical transmembrane spans lie at 364–384 (GLSL…LICF), 422–442 (LVQQ…FCLF), and 453–473 (SIYF…PYIH). The Di-lysine motif motif lies at 484-487 (KKRE).

Belongs to the membrane-bound acyltransferase family. Detected ubiquitously, with high expression levels in small intestine, brown adipose tissue, liver, kidney and testis. Expressed in liver and both proximal and distal small intestine (at protein level). Expressed in peritoneal macrophages.

The protein localises to the endoplasmic reticulum membrane. The enzyme catalyses a 1-acyl-sn-glycero-3-phosphocholine + an acyl-CoA = a 1,2-diacyl-sn-glycero-3-phosphocholine + CoA. It catalyses the reaction a 1-acyl-sn-glycero-3-phosphoethanolamine + an acyl-CoA = a 1,2-diacyl-sn-glycero-3-phosphoethanolamine + CoA. It carries out the reaction a 1-acyl-sn-glycero-3-phospho-L-serine + an acyl-CoA = a 1,2-diacyl-sn-glycero-3-phospho-L-serine + CoA. The catalysed reaction is (9Z,12Z)-octadecadienoyl-CoA + a 1-acyl-sn-glycero-3-phosphocholine = 1-acyl-2-(9Z,12Z)-octadecadienoyl-sn-glycero-3-phosphocholine + CoA. The enzyme catalyses (5Z,8Z,11Z,14Z)-eicosatetraenoyl-CoA + a 1-acyl-sn-glycero-3-phosphocholine = 1-acyl-2-(5Z,8Z,11Z,14Z-eicosatetraenoyl)-sn-glycero-3-phosphocholine + CoA. It catalyses the reaction dodecanoyl-CoA + 1-hexadecanoyl-sn-glycero-3-phosphocholine = 1-hexadecanoyl-2-dodecanoyl-sn-glycero-3-phosphocholine + CoA. It carries out the reaction octadecanoyl-CoA + 1-hexadecanoyl-sn-glycero-3-phosphocholine = 1-hexadecanoyl-2-octadecanoyl-sn-glycero-3-phosphocholine + CoA. The catalysed reaction is 1-dodecanoyl-sn-glycero-3-phosphocholine + hexadecanoyl-CoA = 1-dodecanoyl-2-hexadecanoyl-sn-glycero-3-phosphocholine + CoA. The enzyme catalyses 1-tetradecanoyl-sn-glycero-3-phosphocholine + hexadecanoyl-CoA = 1-tetradecanoyl-2-hexadecanoyl-sn-glycero-3-phosphocholine + CoA. It catalyses the reaction 1-hexadecanoyl-sn-glycero-3-phosphocholine + hexadecanoyl-CoA = 1,2-dihexadecanoyl-sn-glycero-3-phosphocholine + CoA. It carries out the reaction 1-octadecanoyl-sn-glycero-3-phosphocholine + hexadecanoyl-CoA = 1-octadecanoyl-2-hexadecanoyl-sn-glycero-3-phosphocholine + CoA. The catalysed reaction is 1-(9Z-octadecenoyl)-sn-glycero-3-phosphocholine + hexadecanoyl-CoA = 1-(9Z-octadecenoyl)-2-hexadecanoyl-sn-glycero-3-phosphocholine + CoA. The enzyme catalyses (9Z)-hexadecenoyl-CoA + 1-hexadecanoyl-sn-glycero-3-phosphocholine = 1-hexadecanoyl-2-(9Z-hexadecenoyl)-sn-glycero-3-phosphocholine + CoA. It catalyses the reaction 1-hexadecanoyl-sn-glycero-3-phosphocholine + (9Z)-octadecenoyl-CoA = 1-hexadecanoyl-2-(9Z-octadecenoyl)-sn-glycero-3-phosphocholine + CoA. It carries out the reaction (9Z,12Z)-octadecadienoyl-CoA + 1-hexadecanoyl-sn-glycero-3-phosphocholine = 1-hexadecanoyl-2-(9Z,12Z-octadecadienoyl)-sn-glycero-3-phosphocholine + CoA. The catalysed reaction is 1-dodecanoyl-sn-glycero-3-phosphocholine + (5Z,8Z,11Z,14Z)-eicosatetraenoyl-CoA = 1-dodecanoyl-2-(5Z,8Z,11Z,14Z)-eicosatetraenoyl-sn-glycero-3-phosphocholine + CoA. The enzyme catalyses (5Z,8Z,11Z,14Z)-eicosatetraenoyl-CoA + 1-hexadecanoyl-sn-glycero-3-phosphocholine = 1-hexadecanoyl-2-(5Z,8Z,11Z,14Z-eicosatetraenoyl)-sn-glycero-3-phosphocholine + CoA. It catalyses the reaction 1-octadecanoyl-sn-glycero-3-phosphocholine + (5Z,8Z,11Z,14Z)-eicosatetraenoyl-CoA = 1-octadecanoyl-2-(5Z,8Z,11Z,14Z-eicosatetraenoyl)-sn-glycero-3-phosphocholine + CoA. It carries out the reaction 1-eicosanoyl-sn-glycero-3-phosphocholine + (5Z,8Z,11Z,14Z)-eicosatetraenoyl-CoA = 1-eicosanoyl-2-(5Z,8Z,11Z,14Z)-eicosatetraenoyl-sn-glycero-3-phosphocholine + CoA. The catalysed reaction is 1-(9Z-octadecenoyl)-sn-glycero-3-phosphocholine + (9Z)-octadecenoyl-CoA = 1,2-di-(9Z-octadecenoyl)-sn-glycero-3-phosphocholine + CoA. The enzyme catalyses 1-(9Z-octadecenoyl)-sn-glycero-3-phosphocholine + (9Z,12Z)-octadecadienoyl-CoA = 1-(9Z)-octadecenoyl-2-(9Z,12Z)-octadecadienoyl-sn-glycero-3-phosphocholine + CoA. It catalyses the reaction 1-(9Z-octadecenoyl)-sn-glycero-3-phosphocholine + (5Z,8Z,11Z,14Z)-eicosatetraenoyl-CoA = 1-(9Z)-octadecenoyl-2-(5Z,8Z,11Z,14Z)-icosatetraenoyl-sn-glycero-3-phosphocholine + CoA. It carries out the reaction a 1-acyl-sn-glycero-3-phosphoethanolamine + (9Z,12Z)-octadecadienoyl-CoA = 1-acyl-2-(9Z,12Z)-octadecadienoyl-sn-glycero-3-phosphoethanolamine + CoA. The catalysed reaction is 1-(9Z-octadecenoyl)-sn-glycero-3-phosphoethanolamine + (9Z,12Z)-octadecadienoyl-CoA = 1-(9Z)-octadecenoyl-2-(9Z,12Z)-octadecadienoyl-sn-glycero-3-phosphoethanolamine + CoA. The enzyme catalyses 1-(10Z-heptadecenoyl)-sn-glycero-3-phosphoethanolamine + (9Z,12Z)-octadecadienoyl-CoA = 1-(10Z-heptadecenoyl)-2-(9Z,12Z-octadecadienoyl)-sn-glycero-3-phosphoethanolamine + CoA. It catalyses the reaction a 1-acyl-sn-glycero-3-phosphoethanolamine + (5Z,8Z,11Z,14Z)-eicosatetraenoyl-CoA = 1-acyl-2-(5Z,8Z,11Z,14Z)-eicosatetraenoyl-sn-glycero-3-phosphoethanolamine + CoA. It carries out the reaction 1-hexadecanoyl-sn-glycero-3-phosphoethanolamine + (5Z,8Z,11Z,14Z)-eicosatetraenoyl-CoA = 1-hexadecanoyl-2-(5Z,8Z,11Z,14Z-eicosatetraenoyl)-sn-glycero-3-phosphoethanolamine + CoA. The catalysed reaction is 1-(9Z-octadecenoyl)-sn-glycero-3-phosphoethanolamine + (5Z,8Z,11Z,14Z)-eicosatetraenoyl-CoA = 1-(9Z)-octadecenoyl-2-(5Z,8Z,11Z,14Z)-eicosatetraenoyl-sn-glycero-3-phosphoethanolamine + CoA. The enzyme catalyses 1-(10Z-heptadecenoyl)-sn-glycero-3-phosphoethanolamine + (5Z,8Z,11Z,14Z)-eicosatetraenoyl-CoA = 1-(10Z-heptadecenoyl)-2-(5Z,8Z,11Z,14Z-eicosatetraenoyl)-sn-glycero-3-phosphoethanolamine + CoA. It catalyses the reaction a 1-O-(1Z-alkenyl)-sn-glycero-3-phosphoethanolamine + (5Z,8Z,11Z,14Z)-eicosatetraenoyl-CoA = 1-O-(1Z)-alkenyl-2-(5Z,8Z,11Z,14Z)-eicosatetraenoyl-sn-glycero-3-phosphoethanolamine + CoA. It carries out the reaction a 1-acyl-sn-glycero-3-phospho-L-serine + (9Z,12Z)-octadecadienoyl-CoA = 1-acyl-2-(9Z,12Z-octadecadienoyl)-sn-glycero-3-phospho-L-serine + CoA. The catalysed reaction is a 1-acyl-sn-glycero-3-phospho-L-serine + (5Z,8Z,11Z,14Z)-eicosatetraenoyl-CoA = 1-acyl-2-(5Z,8Z,11Z,14Z-eicosatetraenoyl)-sn-glycero-3-phospho-L-serine + CoA. The enzyme catalyses 1-hexadecanoyl-sn-glycero-3-phospho-L-serine + (9Z)-octadecenoyl-CoA = 1-hexadecanoyl-2-(9Z-octadecenoyl)-sn-glycero-3-phospho-L-serine + CoA. It catalyses the reaction 1-(9Z-octadecenoyl)-sn-glycero-3-phospho-L-serine + (9Z)-octadecenoyl-CoA = 1,2-di-(9Z)-octadecenoyl-sn-glycero-3-phospho-L-serine + CoA. It carries out the reaction 1-hexadecanoyl-sn-glycero-3-phospho-L-serine + (9Z,12Z)-octadecadienoyl-CoA = 1-hexadecanoyl-2-(9Z,12Z-octadecadienoyl)-sn-glycero-3-phospho-L-serine + CoA. The catalysed reaction is 1-(9Z-octadecenoyl)-sn-glycero-3-phospho-L-serine + (9Z,12Z)-octadecadienoyl-CoA = 1-(9Z-octadecenoyl)-2-(9Z,12Z-octadienoyl)-sn-glycero-3-phospho-L-serine + CoA. The enzyme catalyses 1-hexadecanoyl-sn-glycero-3-phospho-L-serine + (5Z,8Z,11Z,14Z)-eicosatetraenoyl-CoA = 1-hexadecanoyl-2-(5Z,8Z,11Z,14Z-eicosatetraenoyl)-sn-glycero-3-phospho-L-serine + CoA. It catalyses the reaction 1-(9Z-octadecenoyl)-sn-glycero-3-phospho-L-serine + (5Z,8Z,11Z,14Z)-eicosatetraenoyl-CoA = 1-(9Z-octadecenoyl)-2-(5Z,8Z,11Z,14Z-eicosatetraenoyl)-sn-glycero-3-phospho-L-serine + CoA. The protein operates within lipid metabolism; phospholipid metabolism. In terms of biological role, lysophospholipid O-acyltransferase (LPLAT) that catalyzes the reacylation step of the phospholipid remodeling process also known as the Lands cycle. Catalyzes transfer of the fatty acyl chain from fatty acyl-CoA to 1-acyl lysophospholipid to form various classes of phospholipids. Converts 1-acyl lysophosphatidylcholine (LPC) into phosphatidylcholine (PC) (LPCAT activity), 1-acyl lysophosphatidylserine (LPS) into phosphatidylserine (PS) (LPSAT activity) and 1-acyl lysophosphatidylethanolamine (LPE) into phosphatidylethanolamine (PE) (LPEAT activity). Favors polyunsaturated fatty acyl-CoAs as acyl donors compared to saturated fatty acyl-CoAs. Has higher activity for LPC acyl acceptors compared to LPEs and LPSs. Can also transfer the fatty acyl chain from fatty acyl-CoA to 1-O-alkyl lysophospholipid or 1-O-alkenyl lysophospholipid with lower efficiency. Acts as a major LPC O-acyltransferase in liver and intestine. As a component of the liver X receptor/NR1H3 or NR1H2 signaling pathway, mainly catalyzes the incorporation of arachidonate into PCs of endoplasmic reticulum (ER) membranes, increasing membrane dynamics and enabling triacylglycerols transfer to nascent very low-density lipoprotein (VLDL) particles. Promotes processing of sterol regulatory protein SREBF1 in hepatocytes, likely by facilitating the translocation of SREBF1-SCAP complex from ER to the Golgi apparatus. Participates in mechanisms by which the liver X receptor/NR1H3 or NR1H2 signaling pathway counteracts lipid-induced ER stress response and inflammation. Down-regulates hepatic inflammation by limiting arachidonic acid availability for synthesis of inflammatory eicosanoids, such as prostaglandins. In enterocytes, acts as a component of a gut-brain feedback loop that coordinates dietary lipid absorption and food intake. Regulates the abundance of PCs containing linoleate and arachidonate in enterocyte membranes, enabling passive diffusion of fatty acids and cholesterol across the membrane for efficient chylomicron assembly. In the intestinal crypt, acts as a component of dietary-responsive phospholipid-cholesterol axis, regulating the biosynthesis of cholesterol and its mitogenic effects on intestinal stem cells. The protein is Lysophospholipid acyltransferase 5 (Lpcat3) of Mus musculus (Mouse).